A 544-amino-acid polypeptide reads, in one-letter code: NAD(P)H-quinone oxidoreductase chain 4 (544 aa).

The next 14 membrane-spanning stretches (helical) occupy residues 29–49 (FPWL…IPLV), 60–80 (WYAL…YLNG), 115–135 (LILL…PVTF), 139–159 (LFFF…AVQD), 161–181 (LLFF…LAIW), 193–213 (FILY…AMAF), 234–254 (GFQA…LPIV), 268–288 (TAPV…YALF), 302–322 (FAPL…LTSF), 339–359 (MGFV…GAML), 360–380 (QMIS…ATYD), 400–422 (MFAM…GFVS), 442–462 (IVID…LLSM), and 488–508 (IYII…PKLV).

Belongs to the complex I subunit 4 family.

The protein localises to the cellular thylakoid membrane. It carries out the reaction a plastoquinone + NADH + (n+1) H(+)(in) = a plastoquinol + NAD(+) + n H(+)(out). The catalysed reaction is a plastoquinone + NADPH + (n+1) H(+)(in) = a plastoquinol + NADP(+) + n H(+)(out). Its function is as follows. NDH-1 shuttles electrons from NAD(P)H, via FMN and iron-sulfur (Fe-S) centers, to quinones in the respiratory chain. The immediate electron acceptor for the enzyme in this species is believed to be plastoquinone. Couples the redox reaction to proton translocation (for every two electrons transferred, four hydrogen ions are translocated across the cytoplasmic membrane), and thus conserves the redox energy in a proton gradient. The polypeptide is NAD(P)H-quinone oxidoreductase chain 4 (Synechococcus sp. (strain RCC307)).